Consider the following 103-residue polypeptide: Large ribosomal subunit protein bL21 (103 aa).

This sequence belongs to the bacterial ribosomal protein bL21 family. In terms of assembly, part of the 50S ribosomal subunit. Contacts protein L20.

Functionally, this protein binds to 23S rRNA in the presence of protein L20. This chain is Large ribosomal subunit protein bL21, found in Salmonella agona (strain SL483).